The following is a 138-amino-acid chain: Small ribosomal subunit protein uS12 (138 aa).

At aspartate 89 the chain carries 3-methylthioaspartic acid. The disordered stretch occupies residues valine 107–lysine 138.

It belongs to the universal ribosomal protein uS12 family. Part of the 30S ribosomal subunit. Contacts proteins S8 and S17. May interact with IF1 in the 30S initiation complex.

Functionally, with S4 and S5 plays an important role in translational accuracy. Its function is as follows. Interacts with and stabilizes bases of the 16S rRNA that are involved in tRNA selection in the A site and with the mRNA backbone. Located at the interface of the 30S and 50S subunits, it traverses the body of the 30S subunit contacting proteins on the other side and probably holding the rRNA structure together. The combined cluster of proteins S8, S12 and S17 appears to hold together the shoulder and platform of the 30S subunit. This Azobacteroides pseudotrichonymphae genomovar. CFP2 protein is Small ribosomal subunit protein uS12.